A 191-amino-acid polypeptide reads, in one-letter code: Apoptosis regulator BHRF1 (191 aa).

Residues methionine 1 to arginine 18 are interaction with host VRK2. An N-linked (GlcNAc...) asparagine; by host glycan is attached at asparagine 22. The BH1 motif lies at glutamate 89–methionine 109. The segment at glutamate 89 to glycine 142 is interaction with host VRK2. The N-linked (GlcNAc...) asparagine; by host glycan is linked to asparagine 118. Positions glycine 142 to asparagine 157 match the BH2 motif. Residues tryptophan 166–isoleucine 186 form a helical membrane-spanning segment.

Belongs to the Bcl-2 family. As to quaternary structure, interacts with isoform 1 of host VRK2; this interaction is involved in protecting cells from apoptosis. Interacts with host PRA1; this interaction seems to modulate BHRF1 anti-apoptotic activity. Interacts with host BCL2L11. Interacts with host BAD and BBC3. Interacts with BALF1; BALF1 acting as a negative regulator of the survival function of BHRF1. Interacts with host BECN1.

It is found in the host membrane. The protein localises to the host mitochondrion. Its function is as follows. Prevents premature death of the host cell during virus production, which would otherwise reduce the amount of progeny virus. Acts as a host B-cell leukemia/lymphoma 2 (Bcl-2) homolog, and interacts with pro-apoptotic proteins to prevent mitochondria permeabilization, release of cytochrome c and subsequent apoptosis of the host cell. In addition, plays a role in the inhibiton of host BECN1-mediated starvation-induced autophagy without affecting basal levels of autophagy. The chain is Apoptosis regulator BHRF1 from Epstein-Barr virus (strain GD1) (HHV-4).